Reading from the N-terminus, the 122-residue chain is Large ribosomal subunit protein uL14 (122 aa).

Belongs to the universal ribosomal protein uL14 family. As to quaternary structure, part of the 50S ribosomal subunit. Forms a cluster with proteins L3 and L19. In the 70S ribosome, L14 and L19 interact and together make contacts with the 16S rRNA in bridges B5 and B8.

Its function is as follows. Binds to 23S rRNA. Forms part of two intersubunit bridges in the 70S ribosome. The sequence is that of Large ribosomal subunit protein uL14 from Chlorobium phaeobacteroides (strain DSM 266 / SMG 266 / 2430).